We begin with the raw amino-acid sequence, 78 residues long: Short neurotoxin OH-46 (78 aa).

An N-terminal signal peptide occupies residues 1–21 (MKNLLLTFLVVTIVCLDLGYT). 4 disulfides stabilise this stretch: Cys24-Cys40, Cys33-Cys58, Cys62-Cys70, and Cys71-Cys76.

It belongs to the three-finger toxin family. Short-chain subfamily. In terms of tissue distribution, expressed by the venom gland.

Its subcellular location is the secreted. This three-finger toxin binds and inhibits the nicotinic acetylcholine receptor (nAChR). This chain is Short neurotoxin OH-46, found in Ophiophagus hannah (King cobra).